The chain runs to 214 residues: Ribosomal RNA large subunit methyltransferase E (214 aa).

S-adenosyl-L-methionine contacts are provided by Gly60, Trp62, Asp86, Asp102, and Asp127. Residue Lys167 is the Proton acceptor of the active site.

This sequence belongs to the class I-like SAM-binding methyltransferase superfamily. RNA methyltransferase RlmE family.

The protein resides in the cytoplasm. It carries out the reaction uridine(2552) in 23S rRNA + S-adenosyl-L-methionine = 2'-O-methyluridine(2552) in 23S rRNA + S-adenosyl-L-homocysteine + H(+). In terms of biological role, specifically methylates the uridine in position 2552 of 23S rRNA at the 2'-O position of the ribose in the fully assembled 50S ribosomal subunit. This Herminiimonas arsenicoxydans protein is Ribosomal RNA large subunit methyltransferase E.